Consider the following 1275-residue polypeptide: Streptococcal hemoprotein receptor (1275 aa).

The signal sequence occupies residues 1 to 26 (MKKISKCAFVAISALVLIQATQTVKS). The segment at 61-123 (GKEYYKHIEK…KKDGDILITF (63 aa)) is HID 1. Positions 87, 196, 197, and 238 each coordinate heme. The segment at 203–269 (IKALTQQITK…KGFEDVTITV (67 aa)) is HID 2. The region spanning 369 to 501 (LTEGTYTLNF…DMTFSKTVTK (133 aa)) is the NEAT 1 domain. 11 LRR repeats span residues 544–567 (LEQIRGELRLDHYELTDISLLKHA), 568–590 (KNITELHLDGNQITEIPKELFSQ), 592–614 (KQLRFLNLRSNHLTYLDKDTFKS), 616–638 (AQLRELYLSSNFIHSLEGGLFQS), 639–662 (LHHLEQLDLSKNRIGRLCDNPFEG), 664–686 (SRLTSLGFAENSLEEIPEKALEP), 687–710 (LTSLNFIDLSQNNLALLPKTIEKL), 712–733 (ALSTIVASRNHITRIDNISFKN), 734–757 (LPKLSVLDLSTNEISNLPNGIFKQ), 759–781 (NQLTKLDFFNNLLTQVEESVFPD), and 783–804 (ETLNLDVKFNQIKSVSPKVRAL). Residues 976–1138 (LRDGIYYLNA…TTEKAKVVKE (163 aa)) enclose the NEAT 2 domain. Disordered stretches follow at residues 1137 to 1174 (KETNNPQENSHLTSTDQLKGPQNRQQEKTPTSPPSAAT), 1186 to 1205 (KATGQSTQETSKTDDTDKAE), and 1210 to 1248 (LVRDHQTSIEGKTAKDTKTKKSDKKHRSNQQSNGEESSS). A compositionally biased stretch (polar residues) spans 1138-1166 (ETNNPQENSHLTSTDQLKGPQNRQQEKTP). 2 stretches are compositionally biased toward basic and acidic residues: residues 1196 to 1205 (SKTDDTDKAE) and 1210 to 1229 (LVRDHQTSIEGKTAKDTKTK). Residues 1250–1269 (YHLIAGLSSFMIVALGFIIG) traverse the membrane as a helical segment.

The protein resides in the cell membrane. Its activity is regulated as follows. May modulate heme uptake according to heme availability. In the presence of high heme concentrations, NEAT 1 facilitates fast heme delivery to Shp, whereas NEAT 2 serves as a temporary storage for heme on the bacterial surface. When heme availability is limiting, heme from NEAT 2 is transferred back to NEAT 1 and from there to Shp. In terms of biological role, hemoprotein receptor that plays a central role in the acquisition of host heme, a source of iron during bacterial infection, and is therefore an important virulence factor. Captures host hemoproteins and their iron-containing heme molecules, and transfers the heme to the cell surface heme-binding protein Shp. Plays a pivotal role in iron acquisition and growth under iron-starvation conditions. Uses a cap and release mechanism in which Shr forms a dynamic complex with hemoglobin that enables the gated release of its most labile heme molecule. This mechanism exploits the hemoglobin beta subunit's inherent weaker affinity for heme, allowing S.pyogenes to preferentially capture only heme-saturated forms of hemoglobin that contain iron. In vitro, binds directly to a variety of heme-containing proteins, including hemoglobin, myoglobin, heme albumin and the hemoglobin-haptoglobin complex. It also binds to and acquires heme from methemoglobin, the ferric form of hemoglobin, which is likely to be a physiologically relevant heme source for the hemolytic group A streptococcus (GAS). Seems to have an inherent ability to reduce the ferric heme present in methemoglobin to ferrous heme and to provide a stable environment for the produced ferrous complex. Does not bind apohemoglobin, apohaptoglobin, fibrinogen or streptavidin, indicating that it specifically recognizes hemoproteins. Functionally, in addition to its role in heme acquisition, functions as an adhesin, contributing to host cell adhesion and hence virulence. Specifically binds to extracellular matrix (ECM) components, including fibronectin and laminin, and mediates bacterial attachment to host epithelial cells. The chain is Streptococcal hemoprotein receptor from Streptococcus pyogenes serotype M1.